A 256-amino-acid polypeptide reads, in one-letter code: Calsenilin (256 aa).

The segment at M1–I22 is disordered. K26 participates in a covalent cross-link: Glycyl lysine isopeptide (Lys-Gly) (interchain with G-Cter in SUMO1). Residues C45 and C46 are each lipidated (S-palmitoyl cysteine). A phosphoserine mark is found at S60 and S63. Residues L67–P123 enclose the EF-hand 1; degenerate domain. K90 is covalently cross-linked (Glycyl lysine isopeptide (Lys-Gly) (interchain with G-Cter in SUMO1)). 3 consecutive EF-hand domains span residues D126 to G161, T162 to M197, and A210 to I245. Residues D175, N177, D179, C181, E186, D223, N225, D227, and E234 each coordinate Ca(2+). The interval E243–I256 is interaction with KCND2.

Belongs to the recoverin family. In terms of assembly, binds to DNA as a homomultimer. Dimerization is induced by binding to calcium. Interacts with the C-terminus of PSEN1 and PSEN2 and with PSEN2 CTF subunit. Associates with KCN1. Component of heteromultimeric potassium channels. Identified in potassium channel complexes containing KCND1, KCND2, KCND3, KCNIP1, KCNIP2, KCNIP3, KCNIP4, DPP6 and DPP10. Interacts with KCND2 and KCND3. In terms of processing, palmitoylated. Palmitoylation enhances association with the plasma membrane. Post-translationally, proteolytically cleaved by caspase-3. Highly expressed in brain. Isoform 1 or isoform 4 (T+ forms) are expressed at equal levels with isoform 2 or isoform 3 (T- forms). Primarily detected in the layer V and deep layer VI of the cerebral cortex, the hippocampus, and the entire cerebellum. Expressed at low levels in testis. Also expressed in heart.

The protein resides in the cytoplasm. The protein localises to the cell membrane. It is found in the endoplasmic reticulum. Its subcellular location is the golgi apparatus. It localises to the nucleus. Functionally, calcium-dependent transcriptional repressor that binds to the DRE element of genes including PDYN and FOS. Affinity for DNA is reduced upon binding to calcium and enhanced by binding to magnesium. Seems to be involved in nociception. Its function is as follows. Regulatory subunit of Kv4/D (Shal)-type voltage-gated rapidly inactivating A-type potassium channels, such as KCND2/Kv4.2 and KCND3/Kv4.3. Modulates channel expression at the cell membrane, gating characteristics, inactivation kinetics and rate of recovery from inactivation in a calcium-dependent and isoform-specific manner. May play a role in the regulation of PSEN2 proteolytic processing and apoptosis. Together with PSEN2 involved in modulation of amyloid-beta formation. The polypeptide is Calsenilin (Kcnip3) (Mus musculus (Mouse)).